A 201-amino-acid polypeptide reads, in one-letter code: Glutathione peroxidase 1 (201 aa).

Ser-32 is modified (phosphoserine). Sec-47 is a catalytic residue. Sec-47 is a non-standard amino acid (selenocysteine). Residues Lys-86, Lys-112, and Lys-146 each carry the N6-acetyllysine; alternate modification. N6-succinyllysine; alternate is present on residues Lys-86, Lys-112, and Lys-146. Residues Ser-195 and Ser-199 each carry the phosphoserine modification.

It belongs to the glutathione peroxidase family. Homotetramer. Interacts with MIEN1. During periods of oxidative stress, Sec-47 may react with a superoxide radical, irreversibly lose hydroselenide and be converted to dehydroalanine.

The protein resides in the cytoplasm. Its subcellular location is the mitochondrion. It catalyses the reaction 2 glutathione + H2O2 = glutathione disulfide + 2 H2O. The catalysed reaction is a hydroperoxy polyunsaturated fatty acid + 2 glutathione = a hydroxy polyunsaturated fatty acid + glutathione disulfide + H2O. It carries out the reaction tert-butyl hydroperoxide + 2 glutathione = tert-butanol + glutathione disulfide + H2O. The enzyme catalyses cumene hydroperoxide + 2 glutathione = 2-phenylpropan-2-ol + glutathione disulfide + H2O. It catalyses the reaction (13S)-hydroperoxy-(9Z,11E)-octadecadienoate + 2 glutathione = (13S)-hydroxy-(9Z,11E)-octadecadienoate + glutathione disulfide + H2O. The catalysed reaction is (9S)-hydroperoxy-(10E,12Z)-octadecadienoate + 2 glutathione = (9S)-hydroxy-(10E,12Z)-octadecadienoate + glutathione disulfide + H2O. It carries out the reaction (5S)-hydroperoxy-(6E,8Z,11Z,14Z)-eicosatetraenoate + 2 glutathione = (5S)-hydroxy-(6E,8Z,11Z,14Z)-eicosatetraenoate + glutathione disulfide + H2O. The enzyme catalyses (12S)-hydroperoxy-(5Z,8Z,10E,14Z)-eicosatetraenoate + 2 glutathione = (12S)-hydroxy-(5Z,8Z,10E,14Z)-eicosatetraenoate + glutathione disulfide + H2O. It catalyses the reaction (12R)-hydroperoxy-(5Z,8Z,10E,14Z)-eicosatetraenoate + 2 glutathione = (12R)-hydroxy-(5Z,8Z,10E,14Z)-eicosatetraenoate + glutathione disulfide + H2O. The catalysed reaction is (15S)-hydroperoxy-(5Z,8Z,11Z,13E)-eicosatetraenoate + 2 glutathione = (15S)-hydroxy-(5Z,8Z,11Z,13E)-eicosatetraenoate + glutathione disulfide + H2O. It carries out the reaction (5S)-hydroperoxy-(6E,8Z,11Z,14Z,17Z)-eicosapentaenoate + 2 glutathione = (5S)-hydroxy-(6E,8Z,11Z,14Z,17Z)-eicosapentaenoate + glutathione disulfide + H2O. The enzyme catalyses (12S)-hydroperoxy-(5Z,8Z,10E,14Z,17Z)-eicosapentaenoate + 2 glutathione = (12S)-hydroxy-(5Z,8Z,10E,14Z,17Z)-eicosapentaenoate + glutathione disulfide + H2O. It catalyses the reaction (15S)-hydroperoxy-(5Z,8Z,11Z,13E,17Z)-eicosapentaenoate + 2 glutathione = (15S)-hydroxy-(5Z,8Z,11Z,13E,17Z)-eicosapentaenoate + glutathione disulfide + H2O. The catalysed reaction is (15S)-hydroperoxy-(11Z,13E)-eicosadienoate + 2 glutathione = (15S)-hydroxy-(11Z,13E)-eicosadienoate + glutathione disulfide + H2O. It carries out the reaction (17S)-hydroperoxy-(4Z,7Z,10Z,13Z,15E,19Z)-docosahexaenoate + 2 glutathione = (17S)-hydroxy-(4Z,7Z,10Z,13Z,15E,19Z)-docosahexaenoate + glutathione disulfide + H2O. Catalyzes the reduction of hydroperoxides in a glutathione-dependent manner thus regulating cellular redox homeostasis. Can reduce small soluble hydroperoxides such as H2O2, cumene hydroperoxide and tert-butyl hydroperoxide, as well as several fatty acid-derived hydroperoxides. In platelets catalyzes the reduction of 12-hydroperoxyeicosatetraenoic acid, the primary product of the arachidonate 12-lipoxygenase pathway. This Pan troglodytes (Chimpanzee) protein is Glutathione peroxidase 1 (GPX1).